The following is a 118-amino-acid chain: Ribonuclease P protein component (118 aa).

Belongs to the RnpA family. Consists of a catalytic RNA component (M1 or rnpB) and a protein subunit.

It carries out the reaction Endonucleolytic cleavage of RNA, removing 5'-extranucleotides from tRNA precursor.. Its function is as follows. RNaseP catalyzes the removal of the 5'-leader sequence from pre-tRNA to produce the mature 5'-terminus. It can also cleave other RNA substrates such as 4.5S RNA. The protein component plays an auxiliary but essential role in vivo by binding to the 5'-leader sequence and broadening the substrate specificity of the ribozyme. This Rickettsia akari (strain Hartford) protein is Ribonuclease P protein component.